The chain runs to 610 residues: T-cell immunomodulatory protein (610 aa).

A signal peptide spans 1–32 (MAAGLLPSARAVLALLFLGLALLSVGPAPAQA). Residues asparagine 35, asparagine 94, asparagine 123, asparagine 138, asparagine 145, asparagine 150, asparagine 175, and asparagine 241 are each glycosylated (N-linked (GlcNAc...) asparagine). One copy of the FG-GAP 1; atypical repeat lies at 98 to 135 (LVTSVVPGDYDGDSQMDVLLTYFPQNHSNNELGAVIFW). The FG-GAP 2; atypical repeat unit spans residues 153-183 (FHDQPLIMDFNGDLIPDVFAITNESSQPQIL). Residues 256–291 (VVGQSAFADFDGDGHMDHLLPGCEDKDCQKSAIYLM) form an FG-GAP 3; atypical repeat. Residues asparagine 351, asparagine 369, and asparagine 480 are each glycosylated (N-linked (GlcNAc...) asparagine). A helical membrane pass occupies residues 564–584 (IVLLTAVALTGVCVFILAIIA).

This sequence belongs to the TIP family. Interacts with RUVBL1, RUVBL2 and alpha-tubulin.

It localises to the secreted. It is found in the cell membrane. Functionally, modulator of T-cell function. Has a protective effect in graft versus host disease model. The chain is T-cell immunomodulatory protein from Rattus norvegicus (Rat).